We begin with the raw amino-acid sequence, 454 residues long: MGDHHDFINSGSWWKVSSSSSPSSSSSMRASSIESGGSAVFHDKLHHHSLATDHHLQMIGLGLSSQSPVDQWNQSLLRGDSKAETSFGVMLQENLNLDATSNANANTTSSTSSYQLQESDSSHHHQALWRDPQSDFKPQILTSGGNRGFFLDHQFSPHGSSSTDSSTVTCQGFAVDNSSNAMYAATTTTPNSSSGMFHHQQAGGFGSSDQQPSRNHQQSSLGYSQFGSSTGNYDQMASALPSTWFLRSSPPPKPHSPLRFSNNATFWNPAAAGNAGAPPPHDASSNFFPALQPPQIHPQSFDEQPKNISEIRDSSSNEVKRGGNDHQPAAKRAKSEAASPSPAFKRKEKMGDRIAALQQLVSPFGKTDAASVLSEAIEYIKFLHQQVSALSNPYMKSGASLQHQQSDHSTELEVSEEPDLRSRGLCLVPVSSTFPVTHDTTVDFWTPTFGGTFR.

The segment covering 101-113 (SNANANTTSSTSS) has biased composition (low complexity). Disordered stretches follow at residues 101–127 (SNANANTTSSTSSYQLQESDSSHHHQA), 185–228 (ATTT…QFGS), 270–348 (AAAG…KRKE), and 398–417 (GASLQHQQSDHSTELEVSEE). 2 stretches are compositionally biased toward polar residues: residues 185–195 (ATTTTPNSSSG) and 207–228 (SSDQQPSRNHQQSSLGYSQFGS). A compositionally biased stretch (basic and acidic residues) spans 303-324 (EQPKNISEIRDSSSNEVKRGGN). The 50-residue stretch at 334–383 (KSEAASPSPAFKRKEKMGDRIAALQQLVSPFGKTDAASVLSEAIEYIKFL) folds into the bHLH domain.

In terms of assembly, homodimer.

Its subcellular location is the nucleus. The polypeptide is Transcription factor bHLH123 (BHLH123) (Arabidopsis thaliana (Mouse-ear cress)).